The following is a 510-amino-acid chain: Glutamate--tRNA ligase (510 aa).

The 'HIGH' region signature appears at 15–25 (PSPTGDPHVGT). Residues 256–260 (KISKR) carry the 'KMSKS' region motif. ATP is bound at residue Lys259.

The protein belongs to the class-I aminoacyl-tRNA synthetase family. Glutamate--tRNA ligase type 1 subfamily. In terms of assembly, monomer.

It is found in the cytoplasm. It carries out the reaction tRNA(Glu) + L-glutamate + ATP = L-glutamyl-tRNA(Glu) + AMP + diphosphate. Its function is as follows. Catalyzes the attachment of glutamate to tRNA(Glu) in a two-step reaction: glutamate is first activated by ATP to form Glu-AMP and then transferred to the acceptor end of tRNA(Glu). The chain is Glutamate--tRNA ligase from Fusobacterium nucleatum subsp. nucleatum (strain ATCC 25586 / DSM 15643 / BCRC 10681 / CIP 101130 / JCM 8532 / KCTC 2640 / LMG 13131 / VPI 4355).